Reading from the N-terminus, the 405-residue chain is Coenzyme F420 hydrogenase subunit alpha (405 aa).

Cys63, Cys66, Cys380, and Cys383 together coordinate Ni(2+).

This sequence belongs to the [NiFe]/[NiFeSe] hydrogenase large subunit family. Heterocomplex of the form (alpha(1)beta(1)gamma(1))(8). Ni(2+) serves as cofactor. It depends on iron-sulfur cluster as a cofactor. FAD is required as a cofactor.

It catalyses the reaction oxidized coenzyme F420-(gamma-L-Glu)(n) + H2 + H(+) = reduced coenzyme F420-(gamma-L-Glu)(n). In terms of biological role, reduces the physiological low-potential two-electron acceptor coenzyme F420, and the artificial one-electron acceptor methylviologen. The sequence is that of Coenzyme F420 hydrogenase subunit alpha (frhA) from Methanothermobacter thermautotrophicus (strain ATCC 29096 / DSM 1053 / JCM 10044 / NBRC 100330 / Delta H) (Methanobacterium thermoautotrophicum).